A 232-amino-acid chain; its full sequence is Small ribosomal subunit protein uS3 (232 aa).

The KH type-2 domain maps to 39–107 (VRQFLTSELK…PAQINIAEVR (69 aa)). A disordered region spans residues 213–232 (AANAVEPKGDKPKKQRKGRK).

This sequence belongs to the universal ribosomal protein uS3 family. Part of the 30S ribosomal subunit. Forms a tight complex with proteins S10 and S14.

Functionally, binds the lower part of the 30S subunit head. Binds mRNA in the 70S ribosome, positioning it for translation. This Vibrio parahaemolyticus serotype O3:K6 (strain RIMD 2210633) protein is Small ribosomal subunit protein uS3.